We begin with the raw amino-acid sequence, 176 residues long: Large ribosomal subunit protein uL16 (176 aa).

It belongs to the universal ribosomal protein uL16 family.

The polypeptide is Large ribosomal subunit protein uL16 (Halorubrum lacusprofundi (strain ATCC 49239 / DSM 5036 / JCM 8891 / ACAM 34)).